The chain runs to 411 residues: Probable UDP-arabinose 4-epimerase 3 (411 aa).

Residues 1–13 show a composition bias toward polar residues; that stretch reads MLSFSRARSQGRN. The segment at 1–22 is disordered; it reads MLSFSRARSQGRNTRPLGGGME. The Cytoplasmic portion of the chain corresponds to 1–31; it reads MLSFSRARSQGRNTRPLGGGMEYLEPKRKSN. A helical; Signal-anchor for type II membrane protein transmembrane segment spans residues 32–50; sequence VMGKIILVVSLTALCIFML. Residues 51–411 lie on the Lumenal side of the membrane; it reads KHAPSFTSPT…KTHPHGYASS (361 aa). Position 71-102 (71-102) interacts with NAD(+); the sequence is HVLVTGGAGYIGSHAALRLLKDSYRVTIVDNL. Tyrosine 219 (proton acceptor) is an active-site residue.

The protein belongs to the NAD(P)-dependent epimerase/dehydratase family. The cofactor is NAD(+).

Its subcellular location is the golgi apparatus. It is found in the golgi stack membrane. It catalyses the reaction UDP-beta-L-arabinopyranose = UDP-alpha-D-xylose. Its pathway is nucleotide-sugar biosynthesis; UDP-L-arabinose biosynthesis; UDP-L-arabinose from UDP-alpha-D-xylose: step 1/1. The protein operates within cell wall biogenesis; cell wall polysaccharide biosynthesis. The protein is Probable UDP-arabinose 4-epimerase 3 of Arabidopsis thaliana (Mouse-ear cress).